The sequence spans 1431 residues: Trophinin (1431 aa).

Disordered regions lie at residues methionine 1–leucine 24, serine 341–glutamine 365, and proline 401–arginine 433. Residues threonine 405–histidine 415 are compositionally biased toward basic residues. Positions leucine 444–alanine 642 constitute an MAGE domain. 2 tandem repeats follow at residues phenylalanine 751–glycine 760 and phenylalanine 769–glycine 778. Residues phenylalanine 751–tyrosine 1430 form a 62 X 10 AA approximate tandem repeats region. Residues glycine 779–serine 786 form a 3; approximate repeat. 2 tandem repeats follow at residues phenylalanine 787–glycine 796 and phenylalanine 805–glycine 814. One copy of the 6; approximate repeat lies at phenylalanine 823 to glycine 833. Copy 7 of the repeat occupies phenylalanine 841–glycine 850. An 8; approximate repeat occupies phenylalanine 859 to glycine 870. One copy of the 9; approximate repeat lies at phenylalanine 879–glycine 890. 5 repeat units span residues glycine 901 to glycine 910, glycine 911 to glycine 920, glycine 921 to glycine 930, glycine 931 to glycine 940, and glycine 941 to glycine 950. Residues glycine 951–aspartate 960 form a 15; approximate repeat. Repeat copies occupy residues glycine 961–glycine 970, glycine 971–glycine 980, serine 981–glycine 990, glycine 991–glycine 1000, glycine 1001–glycine 1010, and glycine 1011–glycine 1020. The stretch at serine 1021–glycine 1030 is one 22; approximate repeat. A run of 4 repeats spans residues glycine 1031 to glycine 1040, glycine 1041 to glycine 1050, glycine 1051 to glycine 1060, and glycine 1061 to glycine 1070. A 27; approximate repeat occupies cysteine 1071 to serine 1080. The 28; approximate repeat unit spans residues glycine 1081–serine 1090. 8 consecutive repeat copies span residues glycine 1091–glycine 1100, glycine 1101–glycine 1110, glycine 1111–glycine 1120, glycine 1121–glycine 1130, alanine 1131–glycine 1140, glycine 1141–glycine 1150, glycine 1151–glycine 1160, and serine 1161–glycine 1170. A 37; approximate repeat occupies glycine 1171 to serine 1180. The 38; approximate repeat unit spans residues glycine 1181 to glycine 1190. A run of 3 repeats spans residues proline 1191 to glycine 1200, asparagine 1201 to glycine 1210, and glycine 1211 to glycine 1220. One copy of the 42; approximate repeat lies at glycine 1221 to serine 1230. Residues glycine 1231 to aspartate 1240 form a 43; approximate repeat. Tandem repeats lie at residues glycine 1241–glycine 1250 and glycine 1251–glycine 1260. Residues glycine 1261–serine 1270 form a 46; approximate repeat. 3 tandem repeats follow at residues glycine 1271–glycine 1280, glycine 1281–glycine 1290, and glycine 1291–glycine 1300. The 50; approximate repeat unit spans residues serine 1301 to serine 1310. Repeat unit 51 spans residues glycine 1311–glycine 1320. A 52; approximate repeat occupies serine 1321–glycine 1330. The stretch at leucine 1331–glycine 1340 is one 53; approximate repeat. One copy of the 54; approximate repeat lies at serine 1341 to glutamate 1350. Residues asparagine 1342–serine 1363 show a composition bias toward low complexity. The segment at asparagine 1342 to valine 1365 is disordered. The 55; approximate repeat unit spans residues proline 1351–glycine 1360. One copy of the 56; approximate repeat lies at proline 1361–glycine 1370. The 57; approximate repeat unit spans residues proline 1371–glycine 1380. One copy of the 58; approximate repeat lies at proline 1381–proline 1390. The stretch at serine 1391 to proline 1400 is one 59; approximate repeat. Residues asparagine 1401–proline 1410 form a 60; approximate repeat. One copy of the 61; approximate repeat lies at serine 1411 to alanine 1420. The 62; approximate repeat unit spans residues alanine 1421–tyrosine 1430.

In terms of assembly, directly binds bystin, and indirectly tastin. As to expression, strong expression at implantation sites. Found in the placenta from the sixth week of pregnancy. Was localized in the cytoplasm of the syncytiotrophoblast in the chorionic villi and in endometrial decidual cells at the uteroplacental interface. After week 10, the level decreased and then disappeared from placental villi. Also found in macrophages.

Could be involved with bystin and tastin in a cell adhesion molecule complex that mediates an initial attachment of the blastocyst to uterine epithelial cells at the time of the embryo implantation. Directly responsible for homophilic cell adhesion. The protein is Trophinin (TRO) of Homo sapiens (Human).